A 156-amino-acid polypeptide reads, in one-letter code: Small ribosomal subunit protein uS7 (156 aa).

This sequence belongs to the universal ribosomal protein uS7 family. Part of the 30S ribosomal subunit. Contacts proteins S9 and S11.

Functionally, one of the primary rRNA binding proteins, it binds directly to 16S rRNA where it nucleates assembly of the head domain of the 30S subunit. Is located at the subunit interface close to the decoding center, probably blocks exit of the E-site tRNA. This is Small ribosomal subunit protein uS7 from Magnetococcus marinus (strain ATCC BAA-1437 / JCM 17883 / MC-1).